The primary structure comprises 538 residues: Lipid scramblase CLPTM1L (538 aa).

The Cytoplasmic portion of the chain corresponds to 1-10 (MWSGRSSFTS). Residues 11–31 (LVVGVFVVYVVHTCWVMYGIV) traverse the membrane as a helical segment. The Extracellular segment spans residues 32–284 (YTRPCSGDAN…VKGIFVDTNL (253 aa)). 3 N-linked (GlcNAc...) asparagine glycosylation sites follow: Asn91, Asn101, and Asn229. The chain crosses the membrane as a helical span at residues 285 to 305 (YFLALTFFVAAFHLLFDFLAF). Residues 306 to 324 (KNDISFWKKKKSMIGMSTK) are Cytoplasmic-facing. The chain crosses the membrane as a helical span at residues 325–342 (AVLWRCFSTVVIFLFLLD). Residues 343–346 (EQTS) are Extracellular-facing. Residues 347–364 (LLVLVPAGVGAAIELWKV) form a helical membrane-spanning segment. Residues 365–402 (KKALKMTIFWRGLMPEFQFGTYSESERKTEEYDTQAMK) lie on the Cytoplasmic side of the membrane. Residues 403–423 (YLSYLLYPLCVGGAVYSLLNI) form a helical membrane-spanning segment. At 424–428 (KYKSW) the chain is on the extracellular side. The chain crosses the membrane as a helical span at residues 429 to 449 (YSWLINSFVNGVYAFGFLFML). The Cytoplasmic portion of the chain corresponds to 450-538 (PQLFVNYKLK…EKATRAPHTD (89 aa)).

The protein belongs to the CLPTM1 family. Ubiquitously expressed.

It localises to the endoplasmic reticulum membrane. The enzyme catalyses a 6-(alpha-D-glucosaminyl)-1-(1,2-diacyl-sn-glycero-3-phospho)-1D-myo-inositol(in) = a 6-(alpha-D-glucosaminyl)-1-(1,2-diacyl-sn-glycero-3-phospho)-1D-myo-inositol(out). It carries out the reaction 6-(alpha-D-glucosaminyl)-(1-octadecanoyl,2-(9Z)-octadecenoyl-sn-glycero-3-phospho)-1D-myo-inositol(in) = 6-(alpha-D-glucosaminyl)-(1-octadecanoyl,2-(9Z)-octadecenoyl-sn-glycero-3-phospho)-1D-myo-inositol(out). The catalysed reaction is a 1,2-diacyl-sn-glycero-3-phospho-(1D-myo-inositol)(in) = a 1,2-diacyl-sn-glycero-3-phospho-(1D-myo-inositol)(out). It catalyses the reaction a 1,2-diacyl-sn-glycero-3-phosphocholine(in) = a 1,2-diacyl-sn-glycero-3-phosphocholine(out). The enzyme catalyses a 1,2-diacyl-sn-glycero-3-phosphoethanolamine(in) = a 1,2-diacyl-sn-glycero-3-phosphoethanolamine(out). Scramblase that mediates the translocation of glucosaminylphosphatidylinositol (alpha-D-GlcN-(1-6)-(1,2-diacyl-sn-glycero-3-phospho)-1D-myo-inositol, GlcN-PI) across the endoplasmic reticulum (ER) membrane, from the cytosolic leaflet to the luminal leaflet of the ER membrane, where it participates in the biosynthesis of glycosylphosphatidylinositol (GPI). GPI is a lipid glycoconjugate involved in post-translational modification of proteins. Can also translocate 1,2-diacyl-sn-glycero-3-phospho-(1D-myo-inositol) (phosphatidylinositol or PI), as well as several other phospholipids (1,2-diacyl-sn-glycero-3-phosphocholine, 1,2-diacyl-sn-glycero-3-phosphoethanolamine), and N-acetylglucosaminylphosphatidylinositol (GlcNAc-PI) in vitro. In Homo sapiens (Human), this protein is Lipid scramblase CLPTM1L (CLPTM1L).